The chain runs to 1091 residues: Ninein homolog (1091 aa).

The tract at residues 1–361 (MEVSADPYEQ…AVEVDERHAS (361 aa)) is sufficient for binding to microtubules. Disordered stretches follow at residues 100-216 (YIES…TTSP), 456-483 (AQTS…KEEE), 525-602 (KAKK…EELT), and 616-639 (KAAK…SLEQ). A phosphoserine mark is found at Ser-103, Ser-107, Ser-108, Ser-113, and Ser-141. Thr-144 carries the post-translational modification Phosphothreonine. The span at 168–177 (VQRSSSQSDL) shows a compositional bias: polar residues. Positions 487 to 526 (LMEKLAALQMENAQLRDKTDELTIEIESLNVELIRSKTKA) are sufficient for interaction with ens. Basic and acidic residues-rich tracts occupy residues 527–537 (KKQEKQEKQED) and 547–563 (RRGD…ESPR). Ser-594 bears the Phosphoserine mark. Residues 616–634 (KAAKEGRSLTPESRSKELE) show a composition bias toward basic and acidic residues. 2 positions are modified to phosphoserine: Ser-701 and Ser-714. Positions 799–919 (AKSLADSKDE…TSCLSHEKCS (121 aa)) are disordered. The segment covering 822–845 (SHKTASRNNLTTSETSIFSTTPFE) has biased composition (polar residues). Residues 846 to 860 (SSQSGPSPTNSGNSN) show a composition bias toward low complexity. Residues 894–913 (ETSSTASGKSFESNSKTSCL) are compositionally biased toward polar residues.

As to quaternary structure, interacts with ens.

The protein localises to the cytoplasm. It localises to the cytoskeleton. The protein resides in the microtubule organizing center. It is found in the centrosome. Its subcellular location is the perinuclear region. In terms of biological role, required for the positioning and anchorage of the microtubule minus-ends in various cells. In fat body cells, part of perinuclear non-centrosomal microtubule-organizing centers (ncMTOCs) which function to accommodate the organization of microtubule (MT) networks to control nuclear positioning and dynein motor-based retrograde endosomal trafficking. Within the ncMTOCs, Msp300 and shot anchors the ncMTOC at the nuclear surface and recruits the MT minus-end regulators Patronin and Nin for assembly, anchoring and/or stabilization of circumferential and radial MTs at the ncMTOC. This protein may also function with Patronin to recruit msps to the ncMTOC for the gamma-tubulin-independent elongation of radial MTs. In embryonic myotubes and larval myofibers, functions with ens to regulate myonuclear positioning and, as a consequence, is involved in muscle development. Likely functions by positively regulating ens. Essential for embryogenesis, likely by contributing to accurate chromosome segregation during early embryonic nuclear divisions. However, other reports found that it is not essential for embryogenesis or embryonic cellular divisions. The chain is Ninein homolog from Drosophila melanogaster (Fruit fly).